A 502-amino-acid polypeptide reads, in one-letter code: Putative diacyglycerol O-acyltransferase Rv1760 (502 aa).

The Proton acceptor role is filled by histidine 174.

It belongs to the long-chain O-acyltransferase family.

It catalyses the reaction an acyl-CoA + a 1,2-diacyl-sn-glycerol = a triacyl-sn-glycerol + CoA. The catalysed reaction is di-(9Z)-octadecenoylglycerol + (9Z)-octadecenoyl-CoA = 1,2,3-tri-(9Z-octadecenoyl)-glycerol + CoA. It functions in the pathway glycerolipid metabolism; triacylglycerol biosynthesis. Its function is as follows. Catalyzes the terminal and only committed step in triacylglycerol synthesis by using diacylglycerol and fatty acyl CoA as substrates. Required for storage lipid synthesis. In terms of biological role, upon expression in E.coli functions weakly as a triacylglycerol synthase, making triacylglycerol (TG) from diolein and long-chain fatty acyl-CoA. Has very weak wax synthase activity, incorporating palmityl alcohol into wax esters in the presence of palmitoyl-CoA. This Mycobacterium tuberculosis (strain ATCC 25618 / H37Rv) protein is Putative diacyglycerol O-acyltransferase Rv1760.